The chain runs to 359 residues: Probable F-box protein At3g61730 (359 aa).

Composition is skewed to basic and acidic residues over residues 1-14 and 37-48; these read MKTR…DSRG and QKNDIQREEDGR. The disordered stretch occupies residues 1-60; it reads MKTRSSDAEGDSRGKMIAPVGEGNGGRKRKLVQSNEQKNDIQREEDGRAKRRIVQSSDQK. The F-box; degenerate domain occupies 82-128; that stretch reads QSRFSWYEQDIWTYISRFLDGKSLVKLGATNKWFYKIAMEDTVWRFA.

As to quaternary structure, interacts with SKP1A. In terms of tissue distribution, expressed in flower buds, developing anthers, pollen grains, siliques, rosette leaves and roots. Detected at lower levels in open flowers, stems and cauline leaves. Expressed in young seedling in the hydathodes, shoot apical meristem, root tips and lateral root primordia.

It is found in the nucleus. Functionally, regulates tapetum degeneration and pollen maturation during anther development. The protein is Probable F-box protein At3g61730 (RMF) of Arabidopsis thaliana (Mouse-ear cress).